Reading from the N-terminus, the 87-residue chain is Small ribosomal subunit protein bS18 (87 aa).

The protein belongs to the bacterial ribosomal protein bS18 family. In terms of assembly, part of the 30S ribosomal subunit. Forms a tight heterodimer with protein bS6.

Binds as a heterodimer with protein bS6 to the central domain of the 16S rRNA, where it helps stabilize the platform of the 30S subunit. The sequence is that of Small ribosomal subunit protein bS18 from Nitratidesulfovibrio vulgaris (strain ATCC 29579 / DSM 644 / CCUG 34227 / NCIMB 8303 / VKM B-1760 / Hildenborough) (Desulfovibrio vulgaris).